Reading from the N-terminus, the 336-residue chain is Nicotinate-nucleotide--dimethylbenzimidazole phosphoribosyltransferase (336 aa).

Positions 20 to 41 are disordered; it reads GPDAAARAGAEERNGQLTKPPG. Glu-304 functions as the Proton acceptor in the catalytic mechanism.

This sequence belongs to the CobT family.

The catalysed reaction is 5,6-dimethylbenzimidazole + nicotinate beta-D-ribonucleotide = alpha-ribazole 5'-phosphate + nicotinate + H(+). It participates in nucleoside biosynthesis; alpha-ribazole biosynthesis; alpha-ribazole from 5,6-dimethylbenzimidazole: step 1/2. Its function is as follows. Catalyzes the synthesis of alpha-ribazole-5'-phosphate from nicotinate mononucleotide (NAMN) and 5,6-dimethylbenzimidazole (DMB). The polypeptide is Nicotinate-nucleotide--dimethylbenzimidazole phosphoribosyltransferase (Ruegeria pomeroyi (strain ATCC 700808 / DSM 15171 / DSS-3) (Silicibacter pomeroyi)).